Here is a 171-residue protein sequence, read N- to C-terminus: S-ribosylhomocysteine lyase (171 aa).

Fe cation is bound by residues H54, H58, and C128.

The protein belongs to the LuxS family. As to quaternary structure, homodimer. It depends on Fe cation as a cofactor.

The catalysed reaction is S-(5-deoxy-D-ribos-5-yl)-L-homocysteine = (S)-4,5-dihydroxypentane-2,3-dione + L-homocysteine. Functionally, involved in the synthesis of autoinducer 2 (AI-2) which is secreted by bacteria and is used to communicate both the cell density and the metabolic potential of the environment. The regulation of gene expression in response to changes in cell density is called quorum sensing. Catalyzes the transformation of S-ribosylhomocysteine (RHC) to homocysteine (HC) and 4,5-dihydroxy-2,3-pentadione (DPD). This chain is S-ribosylhomocysteine lyase, found in Escherichia fergusonii (strain ATCC 35469 / DSM 13698 / CCUG 18766 / IAM 14443 / JCM 21226 / LMG 7866 / NBRC 102419 / NCTC 12128 / CDC 0568-73).